Reading from the N-terminus, the 236-residue chain is Small ribosomal subunit protein uS2c (236 aa).

It belongs to the universal ribosomal protein uS2 family.

It is found in the plastid. The protein localises to the chloroplast. The polypeptide is Small ribosomal subunit protein uS2c (rps2) (Acorus calamus var. americanus (American sweet flag)).